Consider the following 649-residue polypeptide: Exoribonuclease 2 (649 aa).

An RNB domain is found at 190 to 517; it reads RKDLTDLDFI…NHRLLKSIIK (328 aa). Residues 562–644 form the S1 motif domain; sequence NQKFNAEITD…KTRSIIAKPV (83 aa).

The protein belongs to the RNR ribonuclease family. RNase II subfamily.

It localises to the cytoplasm. The enzyme catalyses Exonucleolytic cleavage in the 3'- to 5'-direction to yield nucleoside 5'-phosphates.. Functionally, involved in mRNA degradation. Hydrolyzes single-stranded polyribonucleotides processively in the 3' to 5' direction. The protein is Exoribonuclease 2 of Buchnera aphidicola subsp. Acyrthosiphon pisum (strain 5A).